The sequence spans 83 residues: Putative defensin-like protein 67 (83 aa).

An N-terminal signal peptide occupies residues 1–24 (MGSSKLMVTCIVVAMLTISCDILS). Disulfide bonds link C38-C82, C42-C65, C51-C80, and C55-C81.

This sequence belongs to the DEFL family.

It localises to the secreted. This Arabidopsis thaliana (Mouse-ear cress) protein is Putative defensin-like protein 67.